Consider the following 64-residue polypeptide: Conotoxin Pu3.5 (64 aa).

The N-terminal stretch at 1-16 (LGVLLTICLLLFPLTA) is a signal peptide. Residues 17–49 (VPLDGDQPADQPAGRMQDDISSEQHPFFDPVKR) constitute a propeptide that is removed on maturation. 3 cysteine pairs are disulfide-bonded: Cys50–Cys63, Cys51–Cys58, and Cys54–Cys62.

Belongs to the conotoxin M superfamily. Expressed by the venom duct.

Its subcellular location is the secreted. This chain is Conotoxin Pu3.5, found in Conus pulicarius (Flea-bitten cone).